Consider the following 88-residue polypeptide: UPF0213 protein SAG0778 (88 aa).

The GIY-YIG domain maps to 4–80; that stretch reads VPAYMYVLEC…QKTRQAKLTY (77 aa).

The protein belongs to the UPF0213 family.

The protein is UPF0213 protein SAG0778 of Streptococcus agalactiae serotype V (strain ATCC BAA-611 / 2603 V/R).